We begin with the raw amino-acid sequence, 308 residues long: Porphobilinogen deaminase (308 aa).

Cys-241 carries the post-translational modification S-(dipyrrolylmethanemethyl)cysteine.

Belongs to the HMBS family. As to quaternary structure, monomer. Requires dipyrromethane as cofactor.

The enzyme catalyses 4 porphobilinogen + H2O = hydroxymethylbilane + 4 NH4(+). Its pathway is porphyrin-containing compound metabolism; protoporphyrin-IX biosynthesis; coproporphyrinogen-III from 5-aminolevulinate: step 2/4. In terms of biological role, tetrapolymerization of the monopyrrole PBG into the hydroxymethylbilane pre-uroporphyrinogen in several discrete steps. This Staphylococcus aureus (strain MRSA252) protein is Porphobilinogen deaminase.